Reading from the N-terminus, the 77-residue chain is Translational regulator CsrA (77 aa).

The protein belongs to the CsrA/RsmA family. Homodimer; the beta-strands of each monomer intercalate to form a hydrophobic core, while the alpha-helices form wings that extend away from the core.

The protein localises to the cytoplasm. Functionally, a translational regulator that binds mRNA to regulate translation initiation and/or mRNA stability. Usually binds in the 5'-UTR at or near the Shine-Dalgarno sequence preventing ribosome-binding, thus repressing translation. Its main target seems to be the major flagellin gene, while its function is anatagonized by FliW. In Desulfitobacterium hafniense (strain DSM 10664 / DCB-2), this protein is Translational regulator CsrA.